The following is a 124-amino-acid chain: Large ribosomal subunit protein bL12 (124 aa).

The protein belongs to the bacterial ribosomal protein bL12 family. As to quaternary structure, homodimer. Part of the ribosomal stalk of the 50S ribosomal subunit. Forms a multimeric L10(L12)X complex, where L10 forms an elongated spine to which 2 to 4 L12 dimers bind in a sequential fashion. Binds GTP-bound translation factors.

Functionally, forms part of the ribosomal stalk which helps the ribosome interact with GTP-bound translation factors. Is thus essential for accurate translation. This Rickettsia akari (strain Hartford) protein is Large ribosomal subunit protein bL12.